Here is a 90-residue protein sequence, read N- to C-terminus: Envelope protein US9 (90 aa).

The Intravirion portion of the chain corresponds to 1–67; it reads MTSRLSDPNS…RRRRTRCVGM (67 aa). An Internalization motif motif is present at residues 21 to 24; it reads YPTA. An acidic region spans residues 30–39; sequence EAYYSESEDE. Ser34 and Ser36 each carry phosphoserine; by host CK2. Residues 68–88 form a helical; Signal-anchor for type II membrane protein membrane-spanning segment; the sequence is VIACLLVAVLSGGFGALLMWL. The Virion surface segment spans residues 89–90; sequence LR.

It belongs to the alphaherpesvirinae envelope protein US9 family. Post-translationally, phosphorylated on serines within the acidic cluster, possibly by host CK2. Phosphorylation determines whether endocytosed viral US9 traffics to the trans-Golgi network or recycles to the cell membrane.

It localises to the virion membrane. It is found in the host Golgi apparatus membrane. The protein resides in the host smooth endoplasmic reticulum membrane. Its subcellular location is the host cell membrane. Functionally, essential for the anterograde spread of the infection throughout the host nervous system. Together with the gE/gI heterodimer, US9 is involved in the sorting and transport of viral structural components toward axon tips. The protein is Envelope protein US9 of Homo sapiens (Human).